A 381-amino-acid polypeptide reads, in one-letter code: 5-amino-6-(D-ribitylamino)uracil--L-tyrosine 4-hydroxyphenyl transferase (381 aa).

One can recognise a Radical SAM core domain in the interval 59–306 (VTYVVNRNIN…TAVARIFLGN (248 aa)). [4Fe-4S] cluster contacts are provided by Cys73, Cys77, and Cys80.

This sequence belongs to the radical SAM superfamily. CofH family. As to quaternary structure, consists of two subunits, CofG and CofH. [4Fe-4S] cluster serves as cofactor.

The catalysed reaction is 5-amino-6-(D-ribitylamino)uracil + L-tyrosine + S-adenosyl-L-methionine = 5-amino-5-(4-hydroxybenzyl)-6-(D-ribitylimino)-5,6-dihydrouracil + 2-iminoacetate + 5'-deoxyadenosine + L-methionine + H(+). It functions in the pathway cofactor biosynthesis; coenzyme F0 biosynthesis. In terms of biological role, catalyzes the radical-mediated synthesis of 5-amino-5-(4-hydroxybenzyl)-6-(D-ribitylimino)-5,6-dihydrouracil from 5-amino-6-(D-ribitylamino)uracil and L-tyrosine. This is 5-amino-6-(D-ribitylamino)uracil--L-tyrosine 4-hydroxyphenyl transferase from Cyanothece sp. (strain PCC 7425 / ATCC 29141).